Here is a 123-residue protein sequence, read N- to C-terminus: Large ribosomal subunit protein bL12 (123 aa).

The protein belongs to the bacterial ribosomal protein bL12 family. As to quaternary structure, homodimer. Part of the ribosomal stalk of the 50S ribosomal subunit. Forms a multimeric L10(L12)X complex, where L10 forms an elongated spine to which 2 to 4 L12 dimers bind in a sequential fashion. Binds GTP-bound translation factors.

In terms of biological role, forms part of the ribosomal stalk which helps the ribosome interact with GTP-bound translation factors. Is thus essential for accurate translation. The protein is Large ribosomal subunit protein bL12 of Borrelia turicatae (strain 91E135).